Here is a 208-residue protein sequence, read N- to C-terminus: Small ribosomal subunit protein uS4 (208 aa).

Residues 98-158 enclose the S4 RNA-binding domain; it reads RRLDNVVYRL…EKSRKIACIN (61 aa).

The protein belongs to the universal ribosomal protein uS4 family. In terms of assembly, part of the 30S ribosomal subunit. Contacts protein S5. The interaction surface between S4 and S5 is involved in control of translational fidelity.

One of the primary rRNA binding proteins, it binds directly to 16S rRNA where it nucleates assembly of the body of the 30S subunit. In terms of biological role, with S5 and S12 plays an important role in translational accuracy. The protein is Small ribosomal subunit protein uS4 of Geobacter sulfurreducens (strain ATCC 51573 / DSM 12127 / PCA).